A 150-amino-acid polypeptide reads, in one-letter code: Flagellar assembly factor FliW (150 aa).

Belongs to the FliW family. As to quaternary structure, interacts with translational regulator CsrA. Interacts with flagellins FlaB1, FlaB2 and FlaB3.

Its subcellular location is the cytoplasm. Functionally, acts as an anti-CsrA protein, binds CsrA and prevents it from repressing translation of its target genes, one of which is flagellin. Binds to flagellin and participates in the assembly of the flagellum. Binds to the C-terminal region of flagellin, which is implicated in polymerization, and participates in the assembly of the flagellum. The sequence is that of Flagellar assembly factor FliW from Treponema pallidum (strain Nichols).